The primary structure comprises 170 residues: Protein GrpE (170 aa).

A disordered region spans residues 1-29 (MSEEIKNEEIVEEVEATEEVVETPEKSEL). Residues 10-22 (IVEEVEATEEVVE) are compositionally biased toward acidic residues.

It belongs to the GrpE family. Homodimer.

It is found in the cytoplasm. Participates actively in the response to hyperosmotic and heat shock by preventing the aggregation of stress-denatured proteins, in association with DnaK and GrpE. It is the nucleotide exchange factor for DnaK and may function as a thermosensor. Unfolded proteins bind initially to DnaJ; upon interaction with the DnaJ-bound protein, DnaK hydrolyzes its bound ATP, resulting in the formation of a stable complex. GrpE releases ADP from DnaK; ATP binding to DnaK triggers the release of the substrate protein, thus completing the reaction cycle. Several rounds of ATP-dependent interactions between DnaJ, DnaK and GrpE are required for fully efficient folding. This Streptococcus suis (strain 98HAH33) protein is Protein GrpE.